Consider the following 403-residue polypeptide: S-adenosylmethionine synthase (403 aa).

Residue His-17 coordinates ATP. Asp-19 contacts Mg(2+). Glu-45 lines the K(+) pocket. Glu-58 and Gln-104 together coordinate L-methionine. The segment at 104-114 is flexible loop; it reads QSPDIAQGVDT. ATP-binding positions include 179–181, 250–251, Asp-259, 265–266, Ala-282, and Lys-286; these read DGK, KF, and RK. Position 259 (Asp-259) interacts with L-methionine. Residue Lys-290 participates in L-methionine binding.

The protein belongs to the AdoMet synthase family. As to quaternary structure, homotetramer; dimer of dimers. Requires Mg(2+) as cofactor. It depends on K(+) as a cofactor.

The protein localises to the cytoplasm. It carries out the reaction L-methionine + ATP + H2O = S-adenosyl-L-methionine + phosphate + diphosphate. Its pathway is amino-acid biosynthesis; S-adenosyl-L-methionine biosynthesis; S-adenosyl-L-methionine from L-methionine: step 1/1. Functionally, catalyzes the formation of S-adenosylmethionine (AdoMet) from methionine and ATP. The overall synthetic reaction is composed of two sequential steps, AdoMet formation and the subsequent tripolyphosphate hydrolysis which occurs prior to release of AdoMet from the enzyme. In Mycobacterium bovis (strain BCG / Pasteur 1173P2), this protein is S-adenosylmethionine synthase.